Here is an 826-residue protein sequence, read N- to C-terminus: Zinc phosphodiesterase ELAC protein 2 (826 aa).

The transit peptide at 1-16 directs the protein to the mitochondrion; that stretch reads MWALCSLLRSAAGRTM. Disordered regions lie at residues 16–51 and 188–231; these read MSQG…PSGC and EQRR…VSQR. Positions 27-38 are enriched in basic and acidic residues; it reads ARRERPRKDPLR. A phosphoserine mark is found at Ser-199, Ser-208, Ser-212, Ser-229, Ser-618, and Ser-736. Over residues 208–224 the composition is skewed to basic and acidic residues; that stretch reads SPERSSDSESNENEPHL. A disordered region spans residues 798–826; it reads ELAGGLEDGEPQQKRAHTEEPQAKKVRAQ. The segment covering 808 to 820 has biased composition (basic and acidic residues); that stretch reads PQQKRAHTEEPQA.

This sequence belongs to the RNase Z family. As to quaternary structure, homodimer. Interacts with PTCD1. It depends on Zn(2+) as a cofactor.

Its subcellular location is the mitochondrion. The protein resides in the mitochondrion matrix. It localises to the mitochondrion nucleoid. The protein localises to the nucleus. The enzyme catalyses Endonucleolytic cleavage of RNA, removing extra 3' nucleotides from tRNA precursor, generating 3' termini of tRNAs. A 3'-hydroxy group is left at the tRNA terminus and a 5'-phosphoryl group is left at the trailer molecule.. Zinc phosphodiesterase, which displays mitochondrial tRNA 3'-processing endonuclease activity. Involved in tRNA maturation, by removing a 3'-trailer from precursor tRNA. Associates with mitochondrial DNA complexes at the nucleoids to initiate RNA processing and ribosome assembly. This Pan troglodytes (Chimpanzee) protein is Zinc phosphodiesterase ELAC protein 2 (ELAC2).